A 243-amino-acid polypeptide reads, in one-letter code: Eukaryotic translation initiation factor 4E-2 (243 aa).

The protein belongs to the eukaryotic initiation factor 4E family. EIF4F is a multi-subunit complex, the composition of which varies with external and internal environmental conditions. It is composed of at least eIF4A, eIF4E and eIF4G. eIF4E is also known to interact with other partners.

In terms of biological role, recognizes and binds the 7-methylguanosine-containing mRNA cap during an early step in the initiation of protein synthesis and facilitates ribosome binding by inducing the unwinding of the mRNAs secondary structures. This is Eukaryotic translation initiation factor 4E-2 (tif452) from Schizosaccharomyces pombe (strain 972 / ATCC 24843) (Fission yeast).